Consider the following 203-residue polypeptide: MVEAPEQSETGRIEAFSDGVFAIAITLLVLEIKVPQHKIVETVGLVSSLLSLWPSYLAFLTSFASILVMWVNHHRIFSLVARTDHAFFYWNGLLLMLVTFVPFPTALLAEYLIHPQARVAASVYAGIFLAIAIVFNRLWKHAATADRLLAQKADRHEVDAITKQYRFGPGLYLVAFALSFISVWLSVGVCFVLAIYFALRSNA.

Topologically, residues 1-7 (MVEAPEQ) are cytoplasmic. The helical transmembrane segment at 8–31 (SETGRIEAFSDGVFAIAITLLVLE) threads the bilayer. Residues 12–18 (RIEAFSD) carry the RxxxFSD motif motif. Topologically, residues 32–52 (IKVPQHKIVETVGLVSSLLSL) are extracellular. Residues 37 to 42 (HKIVET) are short helix H1. The tract at residues 44-50 (GLVSSLL) is short helix H2. A helical membrane pass occupies residues 53–78 (WPSYLAFLTSFASILVMWVNHHRIFS). Over 79–84 (LVARTD) the chain is Cytoplasmic. A helical transmembrane segment spans residues 85–110 (HAFFYWNGLLLMLVTFVPFPTALLAE). The Extracellular segment spans residues 111–117 (YLIHPQA). A helical transmembrane segment spans residues 118–142 (RVAASVYAGIFLAIAIVFNRLWKHA). Residues 143 to 154 (ATADRLLAQKAD) lie on the Cytoplasmic side of the membrane. A helical transmembrane segment spans residues 155 to 181 (RHEVDAITKQYRFGPGLYLVAFALSFI). At 182–183 (SV) the chain is on the extracellular side. The chain crosses the membrane as a helical span at residues 184 to 199 (WLSVGVCFVLAIYFAL). Residues 200–203 (RSNA) lie on the Cytoplasmic side of the membrane.

It belongs to the TMEM175 family. Homotetramer.

It localises to the membrane. The enzyme catalyses K(+)(in) = K(+)(out). Functionally, potassium channel. The channel is permeable for K(+), Rb(+) and Cs(+), while it is unable to conduct Na(+). The sequence is that of Potassium channel Cha6605_3372 from Chamaesiphon minutus (strain ATCC 27169 / PCC 6605).